A 303-amino-acid chain; its full sequence is MSKEHTLSQNISRVNFKELQQIIKMGLVQGNLIPAFAGAWLAVVMTNHSFLSSIPQILLMLFGSTLIMGGACALNNYYDQDIDRIMPSKQNRPTVNNRITDQNLLLLSFGMMLVGEICLFLLNIPSGVLGLMGIVGYVSYYSIWSKRHTTWNTVIGSFPGAVPPLIGWVAIEGQISLTAIALFLVVFCWQPIHFYALAIKRKDEYALANIPMLPSVKGFKRTRVSMFIWLIILLPVPLLLINLGVVFVVLATLLNLGWIALGLTTFKKNSDQTKWATQMFIYSLNYLVIFFVLAVIVSLLTLI.

9 helical membrane passes run 25–45, 54–74, 104–124, 125–145, 151–171, 179–199, 227–247, 248–268, and 280–300; these read MGLVQGNLIPAFAGAWLAVVM, IPQILLMLFGSTLIMGGACAL, LLLLSFGMMLVGEICLFLLNI, PSGVLGLMGIVGYVSYYSIWS, WNTVIGSFPGAVPPLIGWVAI, AIALFLVVFCWQPIHFYALAI, FIWLIILLPVPLLLINLGVVF, VVLATLLNLGWIALGLTTFKK, and FIYSLNYLVIFFVLAVIVSLL.

This sequence belongs to the UbiA prenyltransferase family. Protoheme IX farnesyltransferase subfamily. As to quaternary structure, interacts with CtaA.

Its subcellular location is the cell membrane. The enzyme catalyses heme b + (2E,6E)-farnesyl diphosphate + H2O = Fe(II)-heme o + diphosphate. It functions in the pathway porphyrin-containing compound metabolism; heme O biosynthesis; heme O from protoheme: step 1/1. Its function is as follows. Converts heme B (protoheme IX) to heme O by substitution of the vinyl group on carbon 2 of heme B porphyrin ring with a hydroxyethyl farnesyl side group. This is Protoheme IX farnesyltransferase from Staphylococcus aureus (strain Mu3 / ATCC 700698).